The chain runs to 304 residues: Germ cell-specific gene 1-like protein (304 aa).

The Cytoplasmic portion of the chain corresponds to 1–8 (MKTTRKCR). The chain crosses the membrane as a helical span at residues 9 to 29 (ALLSVGLNLLALLFSTTAFIT). Topologically, residues 30–112 (TYWCEGTQRV…FIDLAPASER (83 aa)) are extracellular. The chain crosses the membrane as a helical span at residues 113–133 (GVLWLSVVSEVLYIMLLVVGF). Residues 134–153 (SLMCLELFHSSNVIDGLKLN) lie on the Cytoplasmic side of the membrane. The helical transmembrane segment at 154–174 (AFAAVFTVLSGLLGMVAHMMY) threads the bilayer. Residues 175–197 (TQVFQITVSLGPEDWRPHTWDYG) are Extracellular-facing. Residues 198 to 218 (WSFCMAWGSFTCCMAASVTTL) form a helical membrane-spanning segment. Residues 219–304 (NSYTKTVIEF…NTESLGEEQC (86 aa)) lie on the Cytoplasmic side of the membrane. Residues 266 to 278 (VDVYPSHGSSHGN) are compositionally biased toward polar residues. Residues 266–304 (VDVYPSHGSSHGNSRGKMRSPPAPVDQGDNTESLGEEQC) are disordered.

This sequence belongs to the GSG1 family. Component of the AMPAR complex.

The protein resides in the cell membrane. Its subcellular location is the synapse. Its function is as follows. As a component of the AMPAR complex, modifies AMPA receptor (AMPAR) gating. In Danio rerio (Zebrafish), this protein is Germ cell-specific gene 1-like protein (gsg1l).